We begin with the raw amino-acid sequence, 184 residues long: UPF0149 protein PputW619_5026 (184 aa).

This sequence belongs to the UPF0149 family.

The sequence is that of UPF0149 protein PputW619_5026 from Pseudomonas putida (strain W619).